The sequence spans 236 residues: Protein-L-isoaspartate O-methyltransferase 1 (236 aa).

Residue S86 is part of the active site.

The protein belongs to the methyltransferase superfamily. L-isoaspartyl/D-aspartyl protein methyltransferase family.

Its subcellular location is the cytoplasm. The catalysed reaction is [protein]-L-isoaspartate + S-adenosyl-L-methionine = [protein]-L-isoaspartate alpha-methyl ester + S-adenosyl-L-homocysteine. In terms of biological role, catalyzes the methyl esterification of L-isoaspartyl residues in peptides and proteins that result from spontaneous decomposition of normal L-aspartyl and L-asparaginyl residues. It plays a role in the repair and/or degradation of damaged proteins. The polypeptide is Protein-L-isoaspartate O-methyltransferase 1 (Nitrosospira multiformis (strain ATCC 25196 / NCIMB 11849 / C 71)).